Here is a 511-residue protein sequence, read N- to C-terminus: mRNA export factor (511 aa).

Over residues 1–15 (MATDIDMLIDLGLDL) the composition is skewed to low complexity. The tract at residues 1–244 (MATDIDMLID…ERKAPAADTI (244 aa)) is disordered. The Nuclear export signal motif lies at 5 to 17 (IDMLIDLGLDLSD). A phosphoserine; by host mark is found at Ser-16 and Ser-18. Composition is skewed to acidic residues over residues 16–26 (SDSDLDEDPPE) and 35–51 (LESDSSGECSSSDEDME). Residues 104 to 112 (VWSRLGARR) are interaction with host ALYREF. Residues 110 to 138 (ARRPSCSPEQHGGKVARLQPPPTKAQPAR) carry the Nuclear localization signal motif. Ser-114 is subject to Phosphoserine; by host. Position 138 is a dimethylated arginine; by host (Arg-138). The interval 138-152 (RGGRRGRRRGRGRGG) is RGG-box. The span at 139 to 149 (GGRRGRRRGRG) shows a compositional bias: basic residues. At Arg-148 the chain carries Omega-N-methylarginine; by host. Dimethylated arginine; by host is present on Arg-150. Residues 213-232 (APPPLMTLAIAPPPADPRAP) show a composition bias toward pro residues. 4 residues coordinate Zn(2+): Cys-399, His-478, Cys-482, and Cys-487. The CHC2-type zinc-finger motif lies at 399-487 (CYLKARGLCG…HRQECSSRVC (89 aa)).

This sequence belongs to the HHV-1 ICP27 protein family. As to quaternary structure, interacts with host RBP1; this interaction facilitates the RNA polymerase recruitment to viral transcription sites. Interacts (via the RGG box) with host ALYREF/THOC4; this interaction recruits ALYREF to viral replication compartments and probably directs viral mRNA to the TAP/NFX1 pathway. Interacts (via the RGG box) with host SRPK1; this interaction relocalizes SRPK1 to the nucleus and seems to alter its activity. Interacts with ICP4; this interaction modulates ICP4 DNA-binding activity. Interacts with host NXF1; this interaction allows efficient export of HSV-1 early and late transcripts. Post-translationally, methylated within the RGG box possibly by host PRMT1. When hypomethylated, ICP27 is exported to the cytoplasm earlier and more rapidly. Phosphorylated.

The protein localises to the host cytoplasm. It localises to the host nucleus. In terms of biological role, multifunctional regulator of the expression of viral genes that contributes to the shutoff of host protein synthesis and mediates nuclear export of viral intronless mRNAs. Early in infection, this immediate early (EI) protein mediates the inhibition of cellular splicing. This results in the accumulation of unprocessed 3'end pre-mRNAs which can't be exported from the nucleus. Cellular protein synthesis is thereby shut off early after virus infection. Later in the infection, it helps recruit cellular RNA polymerase II to viral replication sites and promotes the nuclear export of viral intronless mRNAs by interacting with mRNAs and host NXF1/TAP. ICP27 binds to NUP62 which may provide facilitated viral mRNA export and may compete with some host cell transport receptors for binding and inhibit cellular nucleocytoplasmic transport pathways. Also stimulates translation of viral transcripts. Repression of host gene expression blocks the cell cycle at the G1 phase and prevents apoptosis. Seems to silence the 3' splice site of the promyelocytic leukemia (PML) intron 7a, thereby switching PML isoforms from PML-II to PML-V. This could be linked to the accelerated mRNA export induced by ICP27 which might not provide sufficient time for PML pre-mRNA to be spliced in the nucleus. This is mRNA export factor from Human herpesvirus 1 (strain HFEM) (HHV-1).